Reading from the N-terminus, the 366-residue chain is Chorismate synthase (366 aa).

The NADP(+) site is built by R48 and R54. FMN is bound by residues 131-133 (RAS), 243-244 (NA), G288, 303-307 (KPTPS), and R329.

The protein belongs to the chorismate synthase family. As to quaternary structure, homotetramer. It depends on FMNH2 as a cofactor.

The catalysed reaction is 5-O-(1-carboxyvinyl)-3-phosphoshikimate = chorismate + phosphate. It functions in the pathway metabolic intermediate biosynthesis; chorismate biosynthesis; chorismate from D-erythrose 4-phosphate and phosphoenolpyruvate: step 7/7. Functionally, catalyzes the anti-1,4-elimination of the C-3 phosphate and the C-6 proR hydrogen from 5-enolpyruvylshikimate-3-phosphate (EPSP) to yield chorismate, which is the branch point compound that serves as the starting substrate for the three terminal pathways of aromatic amino acid biosynthesis. This reaction introduces a second double bond into the aromatic ring system. This is Chorismate synthase from Bartonella quintana (strain Toulouse) (Rochalimaea quintana).